Here is a 127-residue protein sequence, read N- to C-terminus: Large ribosomal subunit protein uL24 (127 aa).

It belongs to the universal ribosomal protein uL24 family. As to quaternary structure, part of the 50S ribosomal subunit.

In terms of biological role, one of two assembly initiator proteins, it binds directly to the 5'-end of the 23S rRNA, where it nucleates assembly of the 50S subunit. One of the proteins that surrounds the polypeptide exit tunnel on the outside of the subunit. The chain is Large ribosomal subunit protein uL24 from Leptospira biflexa serovar Patoc (strain Patoc 1 / ATCC 23582 / Paris).